The following is a 268-amino-acid chain: MEKRSSIKNRGVLRLPPGFRFHPTDEELVVQYLRRKVTGLPLPASVIPETDVCKSDPWDLPGDCESEMYFFSTREAKYPNGNRSNRSTGSGYWKATGLDKQIGKKKLVVGMKKTLVFYKGKPPNGTRTNWVLHEYRLVDSQQDSLYGQNMNWVLCRVFLKKRSNSNSKRKEDEKEEVENEKETETEREREEENKKSTCPIFYDFMRKDTKKKRRRRRCCDLNLTPATCCCCSSSTSSSSVCSSALTHTSSNDNRQEISYRENKFCLFL.

Residues 15–160 (LPPGFRFHPT…NWVLCRVFLK (146 aa)) enclose the NAC domain. The DNA-binding element occupies 109-166 (VGMKKTLVFYKGKPPNGTRTNWVLHEYRLVDSQQDSLYGQNMNWVLCRVFLKKRSNSN). Residues 166-190 (NSKRKEDEKEEVENEKETETERERE) are disordered. Over residues 180–190 (EKETETERERE) the composition is skewed to basic and acidic residues.

It is found in the nucleus. Its function is as follows. Transcription activator of the mannan synthase CSLA9. Recognizes and binds to DNA-specific sequence of CSLA9 promoter. The protein is NAC domain-containing protein 41 of Arabidopsis thaliana (Mouse-ear cress).